A 418-amino-acid chain; its full sequence is Trans-acting enoyl reductase (418 aa).

It belongs to the saccharopine dehydrogenase family. Enoyl reductase subfamily.

Functionally, involved in the reduction of the double bond between C-4 and C-5 during phthiocerol dimycocerosates (DIM A) and glycosylated phenolphthiocerol dimycocerosates (PGL) biosynthesis. This Mycobacterium leprae (strain TN) protein is Trans-acting enoyl reductase.